Here is a 94-residue protein sequence, read N- to C-terminus: Acylphosphatase (94 aa).

In terms of domain architecture, Acylphosphatase-like spans 7 to 94 (AALVRITGRV…EAPAGFRITR (88 aa)). Catalysis depends on residues Arg-22 and Asn-40.

Belongs to the acylphosphatase family.

The enzyme catalyses an acyl phosphate + H2O = a carboxylate + phosphate + H(+). The polypeptide is Acylphosphatase (acyP) (Sinorhizobium medicae (strain WSM419) (Ensifer medicae)).